Reading from the N-terminus, the 203-residue chain is Reticulon-like protein B12 (203 aa).

One can recognise a Reticulon domain in the interval 24–203 (VADVMLWRKK…WANPENKKLS (180 aa)). 3 helical membrane-spanning segments follow: residues 34–54 (NVSVGIVTVTIASWMVFEAFA), 55–75 (YTIFTLISSVLLLLLSILFLW), and 132–152 (VAVSLFLLSLIGSLMDFQTLC).

The protein resides in the endoplasmic reticulum membrane. The sequence is that of Reticulon-like protein B12 (RTNLB12) from Arabidopsis thaliana (Mouse-ear cress).